A 155-amino-acid chain; its full sequence is Ribosomal RNA large subunit methyltransferase H (155 aa).

S-adenosyl-L-methionine-binding positions include leucine 72, glycine 103, and leucine 122–leucine 127.

The protein belongs to the RNA methyltransferase RlmH family. Homodimer.

It localises to the cytoplasm. It catalyses the reaction pseudouridine(1915) in 23S rRNA + S-adenosyl-L-methionine = N(3)-methylpseudouridine(1915) in 23S rRNA + S-adenosyl-L-homocysteine + H(+). Its function is as follows. Specifically methylates the pseudouridine at position 1915 (m3Psi1915) in 23S rRNA. In Paracidovorax citrulli (strain AAC00-1) (Acidovorax citrulli), this protein is Ribosomal RNA large subunit methyltransferase H.